The primary structure comprises 117 residues: Large ribosomal subunit protein bL20c (117 aa).

Belongs to the bacterial ribosomal protein bL20 family.

The protein resides in the plastid. The protein localises to the chloroplast. Functionally, binds directly to 23S ribosomal RNA and is necessary for the in vitro assembly process of the 50S ribosomal subunit. It is not involved in the protein synthesizing functions of that subunit. This chain is Large ribosomal subunit protein bL20c, found in Populus trichocarpa (Western balsam poplar).